A 64-amino-acid chain; its full sequence is Neurotoxin BmK-II (64 aa).

In terms of domain architecture, LCN-type CS-alpha/beta spans 2–64; the sequence is RDAYIAKPHN…VPIRIPGNCH (63 aa). 4 disulfide bridges follow: Cys12-Cys63, Cys16-Cys36, Cys22-Cys46, and Cys26-Cys48.

It belongs to the long (4 C-C) scorpion toxin superfamily. Sodium channel inhibitor family. Alpha subfamily. In terms of tissue distribution, expressed by the venom gland.

Its subcellular location is the secreted. Its function is as follows. Binds to sodium channels (Nav) and inhibits the inactivation of the activated channels, thereby blocking neuronal transmission. This toxin is active against mammals and insects. BmK-II is 6-fold less toxic than BmK-I. The polypeptide is Neurotoxin BmK-II (Olivierus martensii (Manchurian scorpion)).